The sequence spans 715 residues: Polyribonucleotide nucleotidyltransferase (715 aa).

The Mg(2+) site is built by Asp498 and Asp504. The region spanning 565–625 (PKVCMMQIKP…ETVKKTVAFI (61 aa)) is the KH domain. In terms of domain architecture, S1 motif spans 635–709 (GTCYQASILR…RIDFLLLPKK (75 aa)).

It belongs to the polyribonucleotide nucleotidyltransferase family. Mg(2+) is required as a cofactor.

The protein resides in the cytoplasm. It catalyses the reaction RNA(n+1) + phosphate = RNA(n) + a ribonucleoside 5'-diphosphate. Functionally, involved in mRNA degradation. Catalyzes the phosphorolysis of single-stranded polyribonucleotides processively in the 3'- to 5'-direction. This Aster yellows witches'-broom phytoplasma (strain AYWB) protein is Polyribonucleotide nucleotidyltransferase.